Here is a 364-residue protein sequence, read N- to C-terminus: ATP synthase gamma chain, chloroplastic (364 aa).

Residues 1–41 (MACSLSFSSSVSTFHLPTTTQSTQAPPNNATTLPTTNPIQC) constitute a chloroplast transit peptide. A disordered region spans residues 17–36 (PTTTQSTQAPPNNATTLPTT). A compositionally biased stretch (low complexity) spans 25 to 36 (APPNNATTLPTT). The active site involves cysteine 130. Cysteine 240 and cysteine 246 form a disulfide bridge.

Belongs to the ATPase gamma chain family. As to quaternary structure, F-type ATPases have 2 components, CF(1) - the catalytic core - and CF(0) - the membrane proton channel. CF(1) has five subunits: alpha(3), beta(3), gamma(1), delta(1), epsilon(1). CF(0) has four main subunits: a, b, b' and c. In terms of processing, disulfide bond; Cys-240 and Cys-246 are known to form a disulfide bridge in the dark which gives rise to an inactive enzyme. Activation can be brought about by a ferredoxin-dependent reduction of the disulfide bond in the light.

The protein localises to the plastid. The protein resides in the chloroplast thylakoid membrane. In terms of biological role, produces ATP from ADP in the presence of a proton gradient across the membrane. The gamma chain is believed to be important in regulating ATPase activity and the flow of protons through the CF(0) complex. This chain is ATP synthase gamma chain, chloroplastic (ATPC), found in Spinacia oleracea (Spinach).